The primary structure comprises 351 residues: Phospho-N-acetylmuramoyl-pentapeptide-transferase (351 aa).

10 helical membrane-spanning segments follow: residues 17-37 (TAYA…FIIS), 61-83 (MGIP…FFWI), 88-105 (IYFL…CLGF), 130-150 (ILFS…HVSI), 158-178 (SLKL…LISA), 190-210 (GLAI…AYLT), 230-250 (LVIF…FNAY), 254-274 (IMMG…VALI), 279-299 (ILFA…IIQV), and 328-348 (QVVI…LSTI).

Belongs to the glycosyltransferase 4 family. MraY subfamily. It depends on Mg(2+) as a cofactor.

It localises to the cell inner membrane. The catalysed reaction is UDP-N-acetyl-alpha-D-muramoyl-L-alanyl-gamma-D-glutamyl-meso-2,6-diaminopimeloyl-D-alanyl-D-alanine + di-trans,octa-cis-undecaprenyl phosphate = di-trans,octa-cis-undecaprenyl diphospho-N-acetyl-alpha-D-muramoyl-L-alanyl-D-glutamyl-meso-2,6-diaminopimeloyl-D-alanyl-D-alanine + UMP. Its pathway is cell wall biogenesis; peptidoglycan biosynthesis. In terms of biological role, catalyzes the initial step of the lipid cycle reactions in the biosynthesis of the cell wall peptidoglycan: transfers peptidoglycan precursor phospho-MurNAc-pentapeptide from UDP-MurNAc-pentapeptide onto the lipid carrier undecaprenyl phosphate, yielding undecaprenyl-pyrophosphoryl-MurNAc-pentapeptide, known as lipid I. This chain is Phospho-N-acetylmuramoyl-pentapeptide-transferase, found in Borrelia recurrentis (strain A1).